We begin with the raw amino-acid sequence, 93 residues long: AALPPGDAAAAQGGSNGVGPNLYGIVGRKSGTVEGFTYSKANQDSGVMWTPQVLDVYLENPKKFMPGTKMSFAGLKKPQERADLIAYLETLKD.

Residues 1–13 are compositionally biased toward low complexity; the sequence is AALPPGDAAAAQG. The disordered stretch occupies residues 1–21; that stretch reads AALPPGDAAAAQGGSNGVGPN. A heme c-binding site is contributed by Met-70.

The protein belongs to the cytochrome c family. Binds 1 heme c group covalently per subunit.

It localises to the mitochondrion intermembrane space. In terms of biological role, electron carrier protein. The oxidized form of the cytochrome c heme group can accept an electron from the heme group of the cytochrome c1 subunit of cytochrome reductase. Cytochrome c then transfers this electron to the cytochrome oxidase complex, the final protein carrier in the mitochondrial electron-transport chain. The sequence is that of Cytochrome c from Trypanosoma brucei brucei.